The sequence spans 530 residues: PC4 and SFRS1-interacting protein (530 aa).

The 64-residue stretch at methionine 1–asparagine 64 folds into the PWWP domain. Lysine 75 participates in a covalent cross-link: Glycyl lysine isopeptide (Lys-Gly) (interchain with G-Cter in SUMO2). The tract at residues proline 88–aspartate 349 is disordered. Positions serine 93–aspartate 107 are enriched in low complexity. 3 positions are modified to phosphoserine: serine 102, serine 105, and serine 106. Basic and acidic residues predominate over residues lysine 113–lysine 135. 2 positions are modified to phosphothreonine: threonine 115 and threonine 122. Serine 129 is modified (phosphoserine). A Phosphothreonine modification is found at threonine 141. Basic residues predominate over residues alanine 144–alanine 153. Residues arginine 146–glutamine 156 carry the Nuclear localization signal motif. Phosphothreonine is present on threonine 167. Phosphoserine occurs at positions 177 and 206. Basic and acidic residues predominate over residues glutamate 213–arginine 261. Serine 271 carries the phosphoserine modification. Phosphothreonine is present on threonine 272. Phosphoserine is present on residues serine 273 and serine 275. The segment covering aspartate 274–glutamate 283 has biased composition (acidic residues). Residues lysine 287–methionine 302 show a composition bias toward basic residues. Basic and acidic residues predominate over residues glycine 305–aspartate 349. Coiled-coil stretches lie at residues glutamine 306–lysine 334 and asparagine 371–glutamate 395. Positions valine 340 to threonine 417 are integrase-binding domain (IBD). Residue serine 434 is modified to Phosphoserine. The residue at position 437 (threonine 437) is a Phosphothreonine. Serine 443 is subject to Phosphoserine. Over residues glutamate 446–threonine 473 the composition is skewed to basic and acidic residues. The interval glutamate 446–asparagine 530 is disordered. Positions glycine 474–glycine 494 are enriched in polar residues. The segment covering glutamate 498–asparagine 530 has biased composition (basic and acidic residues). Phosphoserine is present on serine 514. A Citrulline modification is found at arginine 517. A Phosphoserine modification is found at serine 522. Threonine 527 is subject to Phosphothreonine.

It belongs to the HDGF family. In terms of assembly, monomer. Interacts with IFRD1/PC4. Interacts (via IBD domain) with POGZ (via IBM motif) and CDCA7L (via IBM motifs). Interacts (via IBD domain) with KMT2A (via IBM motifs) with a moderate affinity whereas interacts with the KMT2A-MEN1 complex with a greater affinity; MEN1 enhances interaction of KMT2A with PSIP1. Interacts (via IBD domain) with IWS1 (via IBM motif), MED1 (via IBM motif) and DBF4 (via IBM motifs). In terms of processing, citrullinated by PADI4.

It localises to the nucleus. Functionally, transcriptional coactivator involved in neuroepithelial stem cell differentiation and neurogenesis. Involved in particular in lens epithelial cell gene regulation and stress responses. May play an important role in lens epithelial to fiber cell terminal differentiation. May play a protective role during stress-induced apoptosis. This is PC4 and SFRS1-interacting protein (PSIP1) from Bos taurus (Bovine).